A 431-amino-acid polypeptide reads, in one-letter code: Adenylosuccinate synthetase (431 aa).

Residues 13 to 19 and 41 to 43 each bind GTP; these read GDEGKGK and GHT. Asp-14 functions as the Proton acceptor in the catalytic mechanism. The Mg(2+) site is built by Asp-14 and Gly-41. IMP-binding positions include 14–17, 39–42, Thr-130, Arg-144, Gln-225, Thr-240, and Arg-304; these read DEGK and NAGH. The active-site Proton donor is His-42. 300 to 306 serves as a coordination point for substrate; that stretch reads ATTGRER. Residues Arg-306, 332–334, and 415–417 each bind GTP; these read KLD and STG.

It belongs to the adenylosuccinate synthetase family. Homodimer. It depends on Mg(2+) as a cofactor.

The protein resides in the cytoplasm. The catalysed reaction is IMP + L-aspartate + GTP = N(6)-(1,2-dicarboxyethyl)-AMP + GDP + phosphate + 2 H(+). It participates in purine metabolism; AMP biosynthesis via de novo pathway; AMP from IMP: step 1/2. Functionally, plays an important role in the de novo pathway of purine nucleotide biosynthesis. Catalyzes the first committed step in the biosynthesis of AMP from IMP. In Colwellia psychrerythraea (strain 34H / ATCC BAA-681) (Vibrio psychroerythus), this protein is Adenylosuccinate synthetase.